The primary structure comprises 641 residues: Chaperone protein DnaK 2 (641 aa).

T199 is modified (phosphothreonine; by autocatalysis). Low complexity predominate over residues 601–616; it reads MAQQQAQAQHAQSSQQ. A disordered region spans residues 601 to 641; it reads MAQQQAQAQHAQSSQQTNDTTGQSSTDDDVFEAEFEEVKDK. Residues 626 to 635 show a composition bias toward acidic residues; the sequence is TDDDVFEAEF.

The protein belongs to the heat shock protein 70 family.

Functionally, acts as a chaperone. This chain is Chaperone protein DnaK 2, found in Photobacterium profundum (strain SS9).